A 249-amino-acid polypeptide reads, in one-letter code: NAD(P)H-quinone oxidoreductase subunit K (249 aa).

[4Fe-4S] cluster contacts are provided by cysteine 65, cysteine 66, cysteine 130, and cysteine 161.

It belongs to the complex I 20 kDa subunit family. In terms of assembly, NDH-1 can be composed of about 15 different subunits; different subcomplexes with different compositions have been identified which probably have different functions. [4Fe-4S] cluster serves as cofactor.

It localises to the cellular thylakoid membrane. It carries out the reaction a plastoquinone + NADH + (n+1) H(+)(in) = a plastoquinol + NAD(+) + n H(+)(out). The enzyme catalyses a plastoquinone + NADPH + (n+1) H(+)(in) = a plastoquinol + NADP(+) + n H(+)(out). Functionally, NDH-1 shuttles electrons from an unknown electron donor, via FMN and iron-sulfur (Fe-S) centers, to quinones in the respiratory and/or the photosynthetic chain. The immediate electron acceptor for the enzyme in this species is believed to be plastoquinone. Couples the redox reaction to proton translocation, and thus conserves the redox energy in a proton gradient. Cyanobacterial NDH-1 also plays a role in inorganic carbon-concentration. This is NAD(P)H-quinone oxidoreductase subunit K from Prochlorococcus marinus (strain NATL2A).